Reading from the N-terminus, the 344-residue chain is uncharacterized protein (344 aa).

Residues 242-343 (RGITALVRSK…GVAPSEYSRR (102 aa)) enclose the HTH araC/xylS-type domain. DNA-binding regions (H-T-H motif) lie at residues 263-284 (TDVA…AEEG) and 310-333 (VQQV…KRWY).

This is an uncharacterized protein from Mycobacterium bovis (strain ATCC BAA-935 / AF2122/97).